The following is a 426-amino-acid chain: L-ascorbate peroxidase T, chloroplastic (426 aa).

The active-site Proton acceptor is the His112. Residue His241 participates in heme b binding. Position 242 (Thr242) interacts with K(+). A disordered region spans residues 245 to 269 (RARPDRSGWGKPETKYTKTGPGEAG). The span at 246-260 (ARPDRSGWGKPETKY) shows a compositional bias: basic and acidic residues. Positions 274 and 281 each coordinate K(+). The chain crosses the membrane as a helical span at residues 397 to 417 (YFLNIIIAIGVLVLLSTLFGG).

This sequence belongs to the peroxidase family. Ascorbate peroxidase subfamily. The cofactor is heme b.

It localises to the plastid. Its subcellular location is the chloroplast thylakoid membrane. It carries out the reaction L-ascorbate + H2O2 = L-dehydroascorbate + 2 H2O. Its function is as follows. Plays a key role in hydrogen peroxide removal. The protein is L-ascorbate peroxidase T, chloroplastic (APXT) of Arabidopsis thaliana (Mouse-ear cress).